The following is a 963-amino-acid chain: Ras-interacting protein 1 (963 aa).

A compositionally biased stretch (basic and acidic residues) spans methionine 1–glycine 10. 2 disordered regions span residues methionine 1 to glycine 22 and leucine 35 to tryptophan 118. A compositionally biased stretch (low complexity) spans serine 41 to serine 57. The residue at position 94 (arginine 94) is an Omega-N-methylarginine. The segment covering serine 96–glycine 113 has biased composition (gly residues). In terms of domain architecture, Ras-associating spans proline 144–glutamate 259. Residues serine 188, serine 280, and serine 292 each carry the phosphoserine modification. The tract at residues alanine 267 to alanine 356 is disordered. Positions alanine 290 to glycine 301 are enriched in low complexity. Residues proline 302–glycine 313 show a composition bias toward gly residues. The segment covering asparagine 320–glutamine 333 has biased composition (low complexity). Phosphoserine occurs at positions 326, 328, 331, and 419. The Dilute domain occupies glycine 600–threonine 897.

In terms of assembly, interacts with Ras family members that have been activated by GTP binding. Interacts with HRAS, RAP1A, RAP2, RRAS, RAF1 and RRAS2. Interacts with MYH9 and ARHGAP29. As to expression, highly expressed in heart. Detected at lower levels in placenta and pancreas.

It localises to the cytoplasm. Its subcellular location is the perinuclear region. The protein localises to the golgi apparatus. It is found in the golgi stack. Required for the proper formation of vascular structures that develop via both vasculogenesis and angiogenesis. Acts as a critical and vascular-specific regulator of GTPase signaling, cell architecture, and adhesion, which is essential for endothelial cell morphogenesis and blood vessel tubulogenesis. Regulates the activity of Rho GTPases in part by recruiting ARHGAP29 and suppressing RhoA signaling and dampening ROCK and MYH9 activities in endothelial cells. May act as effector for Golgi-bound HRAS and other Ras-like proteins. May promote HRAS-mediated transformation. Negative regulator of amino acid starvation-induced autophagy. This chain is Ras-interacting protein 1 (RASIP1), found in Homo sapiens (Human).